A 332-amino-acid chain; its full sequence is ADP-L-glycero-D-manno-heptose-6-epimerase (332 aa).

Residues 11-12 (FI), 32-33 (DN), Lys-39, Lys-54, 76-80 (EGACS), and Asn-93 each bind NADP(+). The active-site Proton acceptor is the Tyr-140. Lys-144 is an NADP(+) binding site. Residue Asn-170 coordinates substrate. NADP(+)-binding residues include Val-171 and Lys-179. The active-site Proton acceptor is the Lys-179. Residues Arg-181, His-188, 202–205 (FEGS), Arg-215, and Tyr-294 contribute to the substrate site.

It belongs to the NAD(P)-dependent epimerase/dehydratase family. HldD subfamily. In terms of assembly, homopentamer. NADP(+) is required as a cofactor.

It catalyses the reaction ADP-D-glycero-beta-D-manno-heptose = ADP-L-glycero-beta-D-manno-heptose. It participates in nucleotide-sugar biosynthesis; ADP-L-glycero-beta-D-manno-heptose biosynthesis; ADP-L-glycero-beta-D-manno-heptose from D-glycero-beta-D-manno-heptose 7-phosphate: step 4/4. Catalyzes the interconversion between ADP-D-glycero-beta-D-manno-heptose and ADP-L-glycero-beta-D-manno-heptose via an epimerization at carbon 6 of the heptose. This is ADP-L-glycero-D-manno-heptose-6-epimerase from Dechloromonas aromatica (strain RCB).